Consider the following 155-residue polypeptide: uncharacterized protein (155 aa).

2 disordered regions span residues 24–63 and 80–155; these read RVGY…VVLK and KAAK…DENE. A Phosphoserine modification is found at Ser-50. Lys-108 bears the N6-acetyllysine mark. A compositionally biased stretch (polar residues) spans 128-147; it reads KQSSVRKNSQKQIKNSSLLS. Phosphoserine occurs at positions 130, 147, and 150.

This is an uncharacterized protein from Mus musculus (Mouse).